The following is a 1027-amino-acid chain: Pro-apoptotic serine protease nma111 (1027 aa).

The interval 1–46 is disordered; it reads MDLNGDAGAKRKRSSIVPAERPAKHLKPESSALTPGDSTPANGTVY. Polar residues predominate over residues 31–42; the sequence is SALTPGDSTPAN. The segment at 81–265 is serine protease; that stretch reads VVSIHFCQTC…AATDYFLPLD (185 aa). Catalysis depends on charge relay system residues His-119, Asp-150, and Ser-232. PDZ domains lie at 288-373 and 875-956; these read QWIL…LLVQ and VFCG…VTFD. The tract at residues 991–1027 is disordered; it reads HNKSKHKDGIAPDAANLNPDAMEQGYDGASDIEPEAE.

It belongs to the peptidase S1C family.

It localises to the nucleus. Its function is as follows. Nuclear serine protease which mediates apoptosis. This is Pro-apoptotic serine protease nma111 (nma111) from Aspergillus oryzae (strain ATCC 42149 / RIB 40) (Yellow koji mold).